A 266-amino-acid polypeptide reads, in one-letter code: Transmembrane domain-containing protein TMIGD3 (266 aa).

The segment at 1-20 (MEGSPAGPIEQKEARWESSW) is disordered. The helical transmembrane segment at 55–75 (FLPVMWLFILLSLALISDAMV) threads the bilayer. A glycan (N-linked (GlcNAc...) asparagine) is linked at asparagine 192. The chain crosses the membrane as a helical span at residues 213 to 233 (ILIICILITGLGIISVISHLT).

As to expression, expressed in the lung and bone. Expressed at lower levels in osteosarcoma tissues (at protein level).

It localises to the membrane. Its function is as follows. Plays a suppressive role in osteosarcoma malignancy by inhibiting NF-kappa-B activity. This Homo sapiens (Human) protein is Transmembrane domain-containing protein TMIGD3.